The chain runs to 221 residues: Urease accessory protein UreG (221 aa).

Gly19–Thr26 lines the GTP pocket.

The protein belongs to the SIMIBI class G3E GTPase family. UreG subfamily. As to quaternary structure, homodimer. UreD, UreF and UreG form a complex that acts as a GTP-hydrolysis-dependent molecular chaperone, activating the urease apoprotein by helping to assemble the nickel containing metallocenter of UreC. The UreE protein probably delivers the nickel.

The protein resides in the cytoplasm. Functionally, facilitates the functional incorporation of the urease nickel metallocenter. This process requires GTP hydrolysis, probably effectuated by UreG. Its function is as follows. Expression of the urease operon increases the likelihood of bacterial survival by contributing to acid resistance in vitro and in vivo in BALB/c mice. Y.enterocolitica enters the body via an oral path and must survive the acidic stomach before being able to colonize the intestinal mucosa. This chain is Urease accessory protein UreG, found in Yersinia enterocolitica.